The sequence spans 306 residues: Lymphotoxin-beta (306 aa).

Over 1–27 the chain is Cytoplasmic; the sequence is MGTRGLQGLGGRPQGRGCLLLAVAGAT. Residues 28-48 traverse the membrane as a helical; Signal-anchor for type II membrane protein segment; that stretch reads SLVTLLLAVPITVLAVLALVP. Topologically, residues 49 to 306 are extracellular; it reads QDQGRRVEKI…KTFFGAVMVG (258 aa). Disordered regions lie at residues 63-112 and 127-151; these read AQAQ…GPVA and PAAD…DLNP. Positions 74–85 are enriched in low complexity; sequence PSCILPSPSSLS. Residues 95 to 112 show a composition bias toward polar residues; it reads QRSNASRNLASTSQGPVA. A glycan (N-linked (GlcNAc...) asparagine) is linked at asparagine 98. One can recognise a THD domain in the interval 154 to 305; the sequence is PAAHLIGAWM…GKTFFGAVMV (152 aa). N-linked (GlcNAc...) asparagine glycosylation is present at asparagine 284.

The protein belongs to the tumor necrosis factor family. Heterotrimer of either two LTB and one LTA subunits or (less prevalent) two LTA and one LTB subunits.

The protein localises to the membrane. Its function is as follows. Cytokine that binds to LTBR/TNFRSF3. May play a specific role in immune response regulation. Provides the membrane anchor for the attachment of the heterotrimeric complex to the cell surface. This Mus musculus (Mouse) protein is Lymphotoxin-beta (Ltb).